The chain runs to 73 residues: Large ribosomal subunit protein bL31 (73 aa).

Belongs to the bacterial ribosomal protein bL31 family. Type A subfamily. As to quaternary structure, part of the 50S ribosomal subunit.

Functionally, binds the 23S rRNA. This Dinoroseobacter shibae (strain DSM 16493 / NCIMB 14021 / DFL 12) protein is Large ribosomal subunit protein bL31.